The chain runs to 316 residues: Transaldolase (316 aa).

The active-site Schiff-base intermediate with substrate is the K132.

The protein belongs to the transaldolase family. Type 1 subfamily. Homodimer.

The protein localises to the cytoplasm. The enzyme catalyses D-sedoheptulose 7-phosphate + D-glyceraldehyde 3-phosphate = D-erythrose 4-phosphate + beta-D-fructose 6-phosphate. It functions in the pathway carbohydrate degradation; pentose phosphate pathway; D-glyceraldehyde 3-phosphate and beta-D-fructose 6-phosphate from D-ribose 5-phosphate and D-xylulose 5-phosphate (non-oxidative stage): step 2/3. Functionally, transaldolase is important for the balance of metabolites in the pentose-phosphate pathway. The protein is Transaldolase of Vibrio campbellii (strain ATCC BAA-1116).